The primary structure comprises 204 residues: Putative F-box protein L168 (204 aa).

One can recognise an F-box domain in the interval 1 to 46 (MNLCDLFDEIIIGIIDELSDRDKIKFMTTCSRFYYFIDKTKYFDIY). A disordered region spans residues 161–184 (NETNKITNNHTNKKINNNKKHQNN). Basic residues predominate over residues 171 to 183 (TNKKINNNKKHQN).

The polypeptide is Putative F-box protein L168 (Acanthamoeba polyphaga (Amoeba)).